A 430-amino-acid polypeptide reads, in one-letter code: L-cysteine:1D-myo-inositol 2-amino-2-deoxy-alpha-D-glucopyranoside ligase (430 aa).

C48 lines the Zn(2+) pocket. Residues 48-51, T63, and 86-88 each bind L-cysteinyl-5'-AMP; these read CGIT and NIT. A 'HIGH' region motif is present at residues 50-60; it reads ITPYDSTHLGH. A 'ERGGDP' region motif is present at residues 192 to 197; the sequence is ERGGDP. W232 is a binding site for L-cysteinyl-5'-AMP. Residue C236 participates in Zn(2+) binding. 254 to 256 lines the L-cysteinyl-5'-AMP pocket; sequence GSD. Zn(2+) is bound at residue H261. I288 is a binding site for L-cysteinyl-5'-AMP. The short motif at 294–298 is the 'KMSKS' region element; the sequence is KMSKS.

It belongs to the class-I aminoacyl-tRNA synthetase family. MshC subfamily. Monomer. It depends on Zn(2+) as a cofactor.

It catalyses the reaction 1D-myo-inositol 2-amino-2-deoxy-alpha-D-glucopyranoside + L-cysteine + ATP = 1D-myo-inositol 2-(L-cysteinylamino)-2-deoxy-alpha-D-glucopyranoside + AMP + diphosphate + H(+). In terms of biological role, catalyzes the ATP-dependent condensation of GlcN-Ins and L-cysteine to form L-Cys-GlcN-Ins. This Corynebacterium efficiens (strain DSM 44549 / YS-314 / AJ 12310 / JCM 11189 / NBRC 100395) protein is L-cysteine:1D-myo-inositol 2-amino-2-deoxy-alpha-D-glucopyranoside ligase (mshC).